The sequence spans 280 residues: Bifunctional protein FolD (280 aa).

NADP(+) contacts are provided by residues 158 to 160 (GES), isoleucine 183, and isoleucine 222.

Belongs to the tetrahydrofolate dehydrogenase/cyclohydrolase family. In terms of assembly, homodimer.

It catalyses the reaction (6R)-5,10-methylene-5,6,7,8-tetrahydrofolate + NADP(+) = (6R)-5,10-methenyltetrahydrofolate + NADPH. The catalysed reaction is (6R)-5,10-methenyltetrahydrofolate + H2O = (6R)-10-formyltetrahydrofolate + H(+). It functions in the pathway one-carbon metabolism; tetrahydrofolate interconversion. Its function is as follows. Catalyzes the oxidation of 5,10-methylenetetrahydrofolate to 5,10-methenyltetrahydrofolate and then the hydrolysis of 5,10-methenyltetrahydrofolate to 10-formyltetrahydrofolate. The chain is Bifunctional protein FolD from Mycoplasma mobile (strain ATCC 43663 / 163K / NCTC 11711) (Mesomycoplasma mobile).